A 579-amino-acid chain; its full sequence is Arginine--tRNA ligase (579 aa).

Residues 128-138 carry the 'HIGH' region motif; it reads PNLAKEMHVGH.

It belongs to the class-I aminoacyl-tRNA synthetase family. Monomer.

It localises to the cytoplasm. The enzyme catalyses tRNA(Arg) + L-arginine + ATP = L-arginyl-tRNA(Arg) + AMP + diphosphate. The protein is Arginine--tRNA ligase of Pseudomonas syringae pv. syringae (strain B728a).